A 445-amino-acid chain; its full sequence is GTPase Der (445 aa).

EngA-type G domains follow at residues 3–167 and 180–353; these read PVIA…YAGQ and IKIA…AAAM. GTP contacts are provided by residues 9-16, 56-60, 119-122, 186-193, 233-237, and 298-301; these read GRPNVGKS, DTGGF, NKAE, DTAGL, and NKWD. In terms of domain architecture, KH-like spans 354–438; it reads AKLPTPKLTR…PLRIEFRSSN (85 aa).

It belongs to the TRAFAC class TrmE-Era-EngA-EngB-Septin-like GTPase superfamily. EngA (Der) GTPase family. As to quaternary structure, associates with the 50S ribosomal subunit.

Functionally, GTPase that plays an essential role in the late steps of ribosome biogenesis. This Burkholderia ambifaria (strain MC40-6) protein is GTPase Der.